Reading from the N-terminus, the 711-residue chain is Interferon-induced GTP-binding protein Mx2 (711 aa).

The 273-residue stretch at 115–387 (DLALPAIAVI…LILHINKSLP (273 aa)) folds into the Dynamin-type G domain. The G1 motif stretch occupies residues 125 to 132 (GDQSSGKS). Position 125–132 (125–132 (GDQSSGKS)) interacts with GTP. The tract at residues 150–152 (VTR) is G2 motif. Positions 225–228 (DLPG) are G3 motif. GTP is bound by residues 225 to 229 (DLPGI) and 294 to 297 (TKPD). The tract at residues 294–297 (TKPD) is G4 motif. A G5 motif region spans residues 326–329 (RCRG). Residues 623–711 (NDEIGVHLNA…ARRALYMFFS (89 aa)) enclose the GED domain.

It belongs to the TRAFAC class dynamin-like GTPase superfamily. Dynamin/Fzo/YdjA family.

It localises to the cytoplasm. Its subcellular location is the nucleus. Interferon-induced dynamin-like GTPase with antiviral activity against vesicular stomatitis virus (VSV). The protein is Interferon-induced GTP-binding protein Mx2 (MX2) of Canis lupus familiaris (Dog).